Reading from the N-terminus, the 130-residue chain is Phosphomevalonate dehydratase small subunit (130 aa).

The active-site Proton acceptor is Ser62.

The protein belongs to the AcnX type II small subunit family. Heterodimer composed of a large subunit (PMDh-L) and a small subunit (PMDh-S).

It catalyses the reaction (R)-5-phosphomevalonate = (2E)-3-methyl-5-phosphooxypent-2-enoate + H2O. It functions in the pathway isoprenoid biosynthesis; isopentenyl diphosphate biosynthesis via mevalonate pathway. In terms of biological role, component of a hydro-lyase that catalyzes the dehydration of mevalonate 5-phosphate (MVA5P) to form trans-anhydromevalonate 5-phosphate (tAHMP). Involved in the archaeal mevalonate (MVA) pathway, which provides fundamental precursors for isoprenoid biosynthesis, such as isopentenyl diphosphate (IPP) and dimethylallyl diphosphate (DMAPP). This is Phosphomevalonate dehydratase small subunit from Pyrococcus abyssi (strain GE5 / Orsay).